The primary structure comprises 393 residues: Ornithine decarboxylase 2 (393 aa).

Lys-62 bears the N6-(pyridoxal phosphate)lysine mark. Pyridoxal 5'-phosphate contacts are provided by residues Ser-194, Gly-231, and 265–268; that span reads EPGR. 314–315 is a substrate binding site; it reads YY. Residue Cys-343 is the Proton donor; shared with dimeric partner of the active site. Asp-344 provides a ligand contact to substrate. A pyridoxal 5'-phosphate-binding site is contributed by Tyr-371.

This sequence belongs to the Orn/Lys/Arg decarboxylase class-II family. Homodimer. Only the dimer is catalytically active, as the active sites are constructed of residues from both monomers. Pyridoxal 5'-phosphate serves as cofactor.

The catalysed reaction is L-ornithine + H(+) = putrescine + CO2. Its pathway is amine and polyamine biosynthesis; putrescine biosynthesis via L-ornithine pathway; putrescine from L-ornithine: step 1/1. Inhibited by antizyme (AZ) in response to polyamine levels. AZ inhibits the assembly of the functional homodimer by binding to ODC monomers and targeting them for ubiquitin-independent proteolytic destruction by the 26S proteasome. Functionally, catalyzes the first and rate-limiting step of polyamine biosynthesis that converts ornithine into putrescine, which is the precursor for the polyamines, spermidine and spermine. Polyamines are essential for cell proliferation and are implicated in cellular processes, ranging from DNA replication to apoptosis. The polypeptide is Ornithine decarboxylase 2 (Odc2) (Drosophila melanogaster (Fruit fly)).